Here is a 156-residue protein sequence, read N- to C-terminus: 6,7-dimethyl-8-ribityllumazine synthase (156 aa).

5-amino-6-(D-ribitylamino)uracil contacts are provided by residues Phe22, 57–59, and 81–83; these read AYE and TVI. 86–87 is a binding site for (2S)-2-hydroxy-3-oxobutyl phosphate; the sequence is GT. Residue His89 is the Proton donor of the active site. Phe114 is a 5-amino-6-(D-ribitylamino)uracil binding site. Residue Arg128 coordinates (2S)-2-hydroxy-3-oxobutyl phosphate.

Belongs to the DMRL synthase family. Forms an icosahedral capsid composed of 60 subunits, arranged as a dodecamer of pentamers.

It carries out the reaction (2S)-2-hydroxy-3-oxobutyl phosphate + 5-amino-6-(D-ribitylamino)uracil = 6,7-dimethyl-8-(1-D-ribityl)lumazine + phosphate + 2 H2O + H(+). Its pathway is cofactor biosynthesis; riboflavin biosynthesis; riboflavin from 2-hydroxy-3-oxobutyl phosphate and 5-amino-6-(D-ribitylamino)uracil: step 1/2. Its function is as follows. Catalyzes the formation of 6,7-dimethyl-8-ribityllumazine by condensation of 5-amino-6-(D-ribitylamino)uracil with 3,4-dihydroxy-2-butanone 4-phosphate. This is the penultimate step in the biosynthesis of riboflavin. This chain is 6,7-dimethyl-8-ribityllumazine synthase, found in Cronobacter sakazakii (strain ATCC BAA-894) (Enterobacter sakazakii).